The chain runs to 358 residues: Trans-enoyl reductase milB (358 aa).

NADP(+) contacts are provided by residues 48-51 (VDTK), 170-173 (ATAT), 193-196 (SAKH), Y211, 258-259 (LD), and 349-350 (VR).

This sequence belongs to the zinc-containing alcohol dehydrogenase family. Monomer.

It carries out the reaction 10 malonyl-CoA + acetyl-CoA + 3 AH2 + 8 NADPH + 18 H(+) = cordypyrone A + 3 A + 10 CO2 + 8 NADP(+) + 11 CoA + 8 H2O. It functions in the pathway secondary metabolite biosynthesis. In terms of biological role, trans-enoyl reductase; part of the gene cluster that mediates the biosynthesis of cordypyrones A and B, 2 pyrones that show modest activities against pathogenic bacteria including methicillin-resistant Staphylococcus aureus (MRSA), Mycobacterium tuberculosis and Bacillus cereus. The HR-PKS milA catalyzes the formation of cordypyrones A via condensation of one acetate with 10 malonate units. Since milA lacks an enoyl reductase domain, the 2 beta-keto processing domains DH and KR of milA collaborate with the trans-enoyl reductase milB to catalyze the different levels of reduction. The cytochrome P450 monooxygenase milC then hydroxylates the C-22 of cordypyrones A to yield cordypyrones B. The protein is Trans-enoyl reductase milB of Cordyceps militaris (strain CM01) (Caterpillar fungus).